Reading from the N-terminus, the 308-residue chain is N-acetylgalactosamine kinase AgaK (308 aa).

Residues 4–11 (GLDIGGTK) and 132–139 (GTGGGLCI) each bind ATP. Zn(2+) is bound by residues H156, C174, C176, and C181.

This sequence belongs to the ROK (NagC/XylR) family.

It localises to the cytoplasm. The catalysed reaction is N-acetyl-D-galactosamine + ATP = N-acetyl-D-galactosamine 6-phosphate + ADP + H(+). It carries out the reaction N-acetyl-D-glucosamine + ATP = N-acetyl-D-glucosamine 6-phosphate + ADP + H(+). Functionally, involved in the pathway of N-acetyl-D-galactosamine degradation. Catalyzes the phosphorylation of N-acetyl-D-galactosamine (GalNAc) to yield D-galactosamine 6-phosphate (GalN-6-P). It can also phosphorylate N-acetylglucosamine (GlcNAc). The chain is N-acetylgalactosamine kinase AgaK from Shewanella sp. (strain ANA-3).